Reading from the N-terminus, the 1058-residue chain is UPF0507 protein YALI0E18612g (1058 aa).

Residues 252–394 (TNEDGPLDQA…IGENREQLEA (143 aa)) form the VPS9 domain.

Belongs to the UPF0507 family.

The protein is UPF0507 protein YALI0E18612g of Yarrowia lipolytica (strain CLIB 122 / E 150) (Yeast).